We begin with the raw amino-acid sequence, 308 residues long: uncharacterized protein (308 aa).

The S4 RNA-binding domain occupies 11-87 (KRLDSLLASL…LKLEVLFEDK (77 aa)). D131 is a catalytic residue.

This sequence belongs to the pseudouridine synthase RluA family.

The enzyme catalyses a uridine in RNA = a pseudouridine in RNA. This is an uncharacterized protein from Mycoplasma genitalium (strain ATCC 33530 / DSM 19775 / NCTC 10195 / G37) (Mycoplasmoides genitalium).